The following is a 478-amino-acid chain: Lipoprotein lipase (478 aa).

A signal peptide spans 1-27 (MESKVLLLLALSVWLQSLTVSRGGLVA). The interaction with GPIHBP1 stretch occupies residues 35 to 56 (KDFRDIESKFALRTPEDTAEDT). C57 and C70 form a disulfide bridge. N73 carries N-linked (GlcNAc...) asparagine glycosylation. Y124 carries the 3'-nitrotyrosine modification. S162 serves as the catalytic Nucleophile. D186 acts as the Charge relay system in catalysis. A 3'-nitrotyrosine modification is found at Y194. Ca(2+)-binding residues include A197, R200, S202, and D205. A disulfide bridge links C246 with C269. Residues 246-269 (CNIGEALRVIAERGLGDVDQLVKC) are essential for determining substrate specificity. H271 serves as the catalytic Charge relay system. 2 cysteine pairs are disulfide-bonded: C294–C313 and C305–C308. In terms of domain architecture, PLAT spans 344–467 (FHYQVKIHFS…KGKSPVIFVK (124 aa)). Y346 is subject to 3'-nitrotyrosine. N-linked (GlcNAc...) asparagine glycosylation occurs at N389. Residues 420-424 (WSNWW) are important for interaction with lipoprotein particles. The tract at residues 433 to 437 (KIRVK) is important for heparin binding. Residues 446 to 470 (IFCSREKMSYLQKGKSPVIFVKCHD) are interaction with GPIHBP1. An intrachain disulfide couples C448 to C468.

The protein belongs to the AB hydrolase superfamily. Lipase family. Homodimer. Interacts with GPIHBP1 with 1:1 stoichiometry. Interacts with APOC2; the interaction activates LPL activity in the presence of lipids. Interaction with heparan sulfate proteoglycans is required to protect LPL against loss of activity. Associates with lipoprotein particles in blood plasma. Interacts with LMF1 and SEL1L; interaction with SEL1L is required to prevent aggregation of newly synthesized LPL in the endoplasmic reticulum (ER), and for normal export of LPL from the ER to the extracellular space. Interacts with SORL1; SORL1 acts as a sorting receptor, promoting LPL localization to endosomes and later to lysosomes, leading to degradation of newly synthesized LPL. Tyrosine nitration after lipopolysaccharide (LPS) challenge down-regulates the lipase activity.

The protein resides in the cell membrane. Its subcellular location is the secreted. The protein localises to the extracellular space. It localises to the extracellular matrix. The catalysed reaction is a triacylglycerol + H2O = a diacylglycerol + a fatty acid + H(+). It carries out the reaction a 1,2-diacyl-sn-glycero-3-phosphocholine + H2O = a 2-acyl-sn-glycero-3-phosphocholine + a fatty acid + H(+). The enzyme catalyses 1,2,3-tri-(9Z-octadecenoyl)-glycerol + H2O = di-(9Z)-octadecenoylglycerol + (9Z)-octadecenoate + H(+). It catalyses the reaction 1,2-di-(9Z-octadecenoyl)-sn-glycero-3-phosphocholine + H2O = (9Z-octadecenoyl)-sn-glycero-3-phosphocholine + (9Z)-octadecenoate + H(+). The catalysed reaction is 1,2,3-tributanoylglycerol + H2O = dibutanoylglycerol + butanoate + H(+). It carries out the reaction 1,2-dihexadecanoyl-sn-glycero-3-phosphocholine + H2O = hexadecanoyl-sn-glycero-3-phosphocholine + hexadecanoate + H(+). Its activity is regulated as follows. The apolipoprotein APOC2 acts as a coactivator of LPL activity. Ca(2+) binding promotes protein stability and formation of the active homodimer. Interaction with GPIHBP1 protects LPL against inactivation by ANGPTL4. Functionally, key enzyme in triglyceride metabolism. Catalyzes the hydrolysis of triglycerides from circulating chylomicrons and very low density lipoproteins (VLDL), and thereby plays an important role in lipid clearance from the blood stream, lipid utilization and storage. Although it has both phospholipase and triglyceride lipase activities it is primarily a triglyceride lipase with low but detectable phospholipase activity. Mediates margination of triglyceride-rich lipoprotein particles in capillaries. Recruited to its site of action on the luminal surface of vascular endothelium by binding to GPIHBP1 and cell surface heparan sulfate proteoglycans. In Ovis aries (Sheep), this protein is Lipoprotein lipase (LPL).